The following is a 776-amino-acid chain: Ion-translocating oxidoreductase complex subunit C (776 aa).

4Fe-4S ferredoxin-type domains follow at residues 368–397 (MGAPQEEQHCIRCSACADACPADLLPQQLY) and 407–436 (KATAHNLADCIECGACAYVCPSNIPLVQYF). [4Fe-4S] cluster contacts are provided by cysteine 377, cysteine 380, cysteine 383, cysteine 387, cysteine 416, cysteine 419, cysteine 422, and cysteine 426. 5 stretches are compositionally biased toward basic and acidic residues: residues 534–543 (ARARQAEKVQ), 597–611 (ADEKPAEPIDPRKAA), 633–647 (ADEKPAEPIDPRKAA), 669–683 (ADEKPAEPIDPRKAA), and 705–719 (ADEKPAEPIDPRKAT). Residues 534 to 754 (ARARQAEKVQ…ENEAEDPRKA (221 aa)) form a disordered region. The span at 721 to 743 (EAAIARAKARKAAQAGERAQAAN) shows a compositional bias: low complexity.

The protein belongs to the 4Fe4S bacterial-type ferredoxin family. RnfC subfamily. As to quaternary structure, the complex is composed of six subunits: RnfA, RnfB, RnfC, RnfD, RnfE and RnfG. It depends on [4Fe-4S] cluster as a cofactor.

The protein localises to the cell inner membrane. Its function is as follows. Part of a membrane-bound complex that couples electron transfer with translocation of ions across the membrane. The chain is Ion-translocating oxidoreductase complex subunit C from Cronobacter sakazakii (strain ATCC BAA-894) (Enterobacter sakazakii).